We begin with the raw amino-acid sequence, 207 residues long: Ribonuclease HII (207 aa).

One can recognise an RNase H type-2 domain in the interval 5–207; it reads PLIIGVDEAG…APVRALLRPC (203 aa). A divalent metal cation-binding residues include aspartate 11, glutamate 12, and aspartate 117.

It belongs to the RNase HII family. Requires Mn(2+) as cofactor. It depends on Mg(2+) as a cofactor.

The protein resides in the cytoplasm. The catalysed reaction is Endonucleolytic cleavage to 5'-phosphomonoester.. Endonuclease that specifically degrades the RNA of RNA-DNA hybrids. This chain is Ribonuclease HII, found in Hyphomonas neptunium (strain ATCC 15444).